Here is a 389-residue protein sequence, read N- to C-terminus: MKFTLISSCVALAAMTLAVEAAPNGKKINIPLAKNNSYKPSAKNALNKALAKYNRRKVGSGGITTEASGSVPMVDYENDVEYYGEVTVGTPGIKLKLDFDTGSSDMWFASTLCSSCSNSHTKYDPKKSSTYAADGRTWSISYGDGSSASGILATDNVNLGGLLIKKQTIELAKRESSAFATDVIDGLLGLGFNTITTVRGVKTPVDNLISQGLISRPIFGVYLGKQSNGGGGEYIFGGYDSSKFKGSLTTVPIDNSEGFWGVTVKSTKIGGTTVSASFDAILDTGTTLLLLPDDVAAKVARSYGASDNGDGTYSITCDTSKLQPLVFTLGSSTFEVPSDSLIFEKDGNKCIAGFAAGGDLAILGDVFLKNNYVVFNQEVPEVQIAPVAN.

The first 21 residues, 1 to 21 (MKFTLISSCVALAAMTLAVEA), serve as a signal peptide directing secretion. Positions 22 to 66 (APNGKKINIPLAKNNSYKPSAKNALNKALAKYNRRKVGSGGITTE) are cleaved as a propeptide — activation peptide. The Peptidase A1 domain maps to 82-385 (YYGEVTVGTP…NQEVPEVQIA (304 aa)). Aspartate 100 is a catalytic residue. A disulfide bridge connects residues cysteine 113 and cysteine 116. The active site involves aspartate 283. An intrachain disulfide couples cysteine 317 to cysteine 350.

It belongs to the peptidase A1 family.

It carries out the reaction Hydrolysis of proteins with broad specificity similar to that of pepsin A, preferring hydrophobic residues at P1 and P1'. Clots milk and activates trypsinogen. Does not cleave 4-Gln-|-His-5, but does cleave 10-His-|-Leu-11 and 12-Val-|-Glu-13 in B chain of insulin.. The protein is Rhizopuspepsin-1 (RNAP) of Rhizopus niveus.